The sequence spans 378 residues: Erythronate-4-phosphate dehydrogenase (378 aa).

Positions 45 and 66 each coordinate substrate. Asp146 contacts NAD(+). Residue Arg207 is part of the active site. Asp231 is a binding site for NAD(+). The active site involves Glu236. The active-site Proton donor is the His253. An NAD(+)-binding site is contributed by Gly256.

Belongs to the D-isomer specific 2-hydroxyacid dehydrogenase family. PdxB subfamily. Homodimer.

The protein resides in the cytoplasm. The catalysed reaction is 4-phospho-D-erythronate + NAD(+) = (R)-3-hydroxy-2-oxo-4-phosphooxybutanoate + NADH + H(+). The protein operates within cofactor biosynthesis; pyridoxine 5'-phosphate biosynthesis; pyridoxine 5'-phosphate from D-erythrose 4-phosphate: step 2/5. Functionally, catalyzes the oxidation of erythronate-4-phosphate to 3-hydroxy-2-oxo-4-phosphonooxybutanoate. This is Erythronate-4-phosphate dehydrogenase from Wigglesworthia glossinidia brevipalpis.